A 262-amino-acid polypeptide reads, in one-letter code: Ribosome biogenesis GTPase A (262 aa).

The region spanning 12–157 (KRQIKDLLRL…ILDTPGILYK (146 aa)) is the CP-type G domain. GTP is bound by residues 54 to 57 (NKVD), 109 to 114 (NTGKST), and Gly-153.

The protein belongs to the TRAFAC class YlqF/YawG GTPase family. MTG1 subfamily.

Its subcellular location is the cytoplasm. Required for a late step of 50S ribosomal subunit assembly. Has GTPase activity. Binds to the 23S rRNA. This is Ribosome biogenesis GTPase A from Thermotoga maritima (strain ATCC 43589 / DSM 3109 / JCM 10099 / NBRC 100826 / MSB8).